A 373-amino-acid chain; its full sequence is Hydrogenase maturation factor HypD (373 aa).

Positions 41, 69, and 72 each coordinate Fe cation.

The protein belongs to the HypD family. As to quaternary structure, monomer. Interacts with HypC. Forms a complex with HypC, or HybG, and HypE. Requires [4Fe-4S] cluster as cofactor.

The protein operates within protein modification; [NiFe] hydrogenase maturation. Involved in the maturation of [NiFe] hydrogenases. Involved in the biosynthesis of the Fe(CN)(2)CO cofactor. HypD may act as a scaffold on which the Fe(CN)(2)CO cofactor is formed. In complex with HypC, accepts the cyanide ligand generated by HypF and HypE, and also coordinates the carbon monoxide ligand. Required for the formation of all three hydrogenase isoenzymes. This Escherichia coli (strain K12) protein is Hydrogenase maturation factor HypD.